A 292-amino-acid polypeptide reads, in one-letter code: MFHGSLVALVTPMHEDGRIDEAALERFIEWQIAEGTNGLVPVGTTGESPTLSHDEHKRVVEITVEVARKRVPVIAGAGSNATREAIGLAKHAESVGADGVLVVTPYYNKPTQDGLLRHFTAVADAIGIPLIIYNIPPRSVIDMSVATMARLAQHPNIVGVKDATANLTRPLHTTAACGASFCQLSGEDHTALAFLAAGGVGCISVTANIAPRLCAEMQAAWRAGDLKTAMAIQSRLLPLHDAMFAESNPAPAKYAASLLGFGSEFCRLPLAPLAEATKAQMRAAMTGLGLLA.

Residue Thr-45 participates in pyruvate binding. Catalysis depends on Tyr-133, which acts as the Proton donor/acceptor. The active-site Schiff-base intermediate with substrate is Lys-161. Ile-203 provides a ligand contact to pyruvate.

This sequence belongs to the DapA family. Homotetramer; dimer of dimers.

The protein resides in the cytoplasm. The catalysed reaction is L-aspartate 4-semialdehyde + pyruvate = (2S,4S)-4-hydroxy-2,3,4,5-tetrahydrodipicolinate + H2O + H(+). Its pathway is amino-acid biosynthesis; L-lysine biosynthesis via DAP pathway; (S)-tetrahydrodipicolinate from L-aspartate: step 3/4. Catalyzes the condensation of (S)-aspartate-beta-semialdehyde [(S)-ASA] and pyruvate to 4-hydroxy-tetrahydrodipicolinate (HTPA). This Acidiphilium cryptum (strain JF-5) protein is 4-hydroxy-tetrahydrodipicolinate synthase.